The sequence spans 134 residues: MLQQQESPIPRLGVGEEGVVGRHVFGEVWGVNDKLLQDDEYLKNLVIKAAEVANMHLVDVKVWRFGGGDKGGVSVIALVLESHIAIHTWPAYNYATIDVYTCGEHSRPWDAYDYIIKQLNPKTFTKTIVDRSSK.

Catalysis depends on S82, which acts as the Schiff-base intermediate with substrate; via pyruvic acid. A Pyruvic acid (Ser); by autocatalysis modification is found at S82. The active-site Proton acceptor; for processing activity is the H87. The active-site Proton donor; for catalytic activity is the C102.

It belongs to the prokaryotic AdoMetDC family. Type 1 subfamily. Heterooctamer of four alpha and four beta chains arranged as a tetramer of alpha/beta heterodimers. Requires pyruvate as cofactor. Is synthesized initially as an inactive proenzyme. Formation of the active enzyme involves a self-maturation process in which the active site pyruvoyl group is generated from an internal serine residue via an autocatalytic post-translational modification. Two non-identical subunits are generated from the proenzyme in this reaction, and the pyruvate is formed at the N-terminus of the alpha chain, which is derived from the carboxyl end of the proenzyme. The post-translation cleavage follows an unusual pathway, termed non-hydrolytic serinolysis, in which the side chain hydroxyl group of the serine supplies its oxygen atom to form the C-terminus of the beta chain, while the remainder of the serine residue undergoes an oxidative deamination to produce ammonia and the pyruvoyl group blocking the N-terminus of the alpha chain.

The catalysed reaction is L-arginine + H(+) = agmatine + CO2. The protein operates within amine and polyamine biosynthesis; agmatine biosynthesis; agmatine from L-arginine: step 1/1. Functionally, specifically catalyzes the decarboxylation of L-arginine to agmatine. Has no S-adenosylmethionine decarboxylase (AdoMetDC) activity. The sequence is that of Arginine decarboxylase proenzyme from Caldivirga maquilingensis (strain ATCC 700844 / DSM 13496 / JCM 10307 / IC-167).